A 468-amino-acid chain; its full sequence is Probable citrate synthase, mitochondrial (468 aa).

Residues H303, H349, and D404 contribute to the active site.

Belongs to the citrate synthase family. In terms of assembly, homodimer.

The protein localises to the mitochondrion matrix. The enzyme catalyses oxaloacetate + acetyl-CoA + H2O = citrate + CoA + H(+). Its pathway is carbohydrate metabolism; tricarboxylic acid cycle; isocitrate from oxaloacetate: step 1/2. The sequence is that of Probable citrate synthase, mitochondrial (cts-1) from Caenorhabditis briggsae.